The chain runs to 320 residues: 3-hydroxybenzoate 6-hydroxylase 2 (320 aa).

The disordered stretch occupies residues 1–25; that stretch reads MRSTNTRSARSRPTKRSVNASATPT. Polar residues predominate over residues 16–25; sequence RSVNASATPT.

This sequence belongs to the 3-hydroxybenzoate 6-hydroxylase family. FAD is required as a cofactor.

It catalyses the reaction 3-hydroxybenzoate + NADH + O2 + H(+) = 2,5-dihydroxybenzoate + NAD(+) + H2O. Functionally, catalyzes the conversion of 3-hydroxybenzoate to gentisate. The sequence is that of 3-hydroxybenzoate 6-hydroxylase 2 (hbzD) from Aquipseudomonas alcaligenes (Pseudomonas alcaligenes).